A 300-amino-acid polypeptide reads, in one-letter code: Acetylglutamate kinase (300 aa).

Substrate-binding positions include 72-73 (GG), Arg-94, and Asn-197.

The protein belongs to the acetylglutamate kinase family. ArgB subfamily.

Its subcellular location is the cytoplasm. The enzyme catalyses N-acetyl-L-glutamate + ATP = N-acetyl-L-glutamyl 5-phosphate + ADP. The protein operates within amino-acid biosynthesis; L-arginine biosynthesis; N(2)-acetyl-L-ornithine from L-glutamate: step 2/4. Catalyzes the ATP-dependent phosphorylation of N-acetyl-L-glutamate. The sequence is that of Acetylglutamate kinase from Aromatoleum aromaticum (strain DSM 19018 / LMG 30748 / EbN1) (Azoarcus sp. (strain EbN1)).